Reading from the N-terminus, the 368-residue chain is Phosphoserine aminotransferase (368 aa).

Arg-44 provides a ligand contact to L-glutamate. Pyridoxal 5'-phosphate-binding positions include 78 to 79, Trp-104, Thr-157, Asp-179, and Gln-202; that span reads AT. N6-(pyridoxal phosphate)lysine is present on Lys-203. Pyridoxal 5'-phosphate is bound at residue 244 to 245; that stretch reads NT.

The protein belongs to the class-V pyridoxal-phosphate-dependent aminotransferase family. SerC subfamily. In terms of assembly, homodimer. Requires pyridoxal 5'-phosphate as cofactor.

The protein resides in the cytoplasm. It carries out the reaction O-phospho-L-serine + 2-oxoglutarate = 3-phosphooxypyruvate + L-glutamate. The catalysed reaction is 4-(phosphooxy)-L-threonine + 2-oxoglutarate = (R)-3-hydroxy-2-oxo-4-phosphooxybutanoate + L-glutamate. Its pathway is amino-acid biosynthesis; L-serine biosynthesis; L-serine from 3-phospho-D-glycerate: step 2/3. It functions in the pathway cofactor biosynthesis; pyridoxine 5'-phosphate biosynthesis; pyridoxine 5'-phosphate from D-erythrose 4-phosphate: step 3/5. Its function is as follows. Catalyzes the reversible conversion of 3-phosphohydroxypyruvate to phosphoserine and of 3-hydroxy-2-oxo-4-phosphonooxybutanoate to phosphohydroxythreonine. The polypeptide is Phosphoserine aminotransferase (Neisseria meningitidis serogroup A / serotype 4A (strain DSM 15465 / Z2491)).